The chain runs to 238 residues: Arginine ABC transporter permease protein ArtQ (238 aa).

Residues 1-14 (MNEFFPLASAAGMT) are Periplasmic-facing. Positions 11 to 223 (AGMTVGLAVC…VITLLSQYIL (213 aa)) constitute an ABC transmembrane type-1 domain. The chain crosses the membrane as a helical span at residues 15 to 35 (VGLAVCALIVGLALAMFFAVW). Topologically, residues 36 to 48 (ESAKWRPVAWAGS) are cytoplasmic. A helical membrane pass occupies residues 49-69 (ALVTILRGLPEILVVLFIYFG). At 70 to 98 (SSQLLLTLSDGFTINLGFVQIPVQMDIEN) the chain is on the periplasmic side. Residues 99–119 (FDVSPFLCGVIALSLLYAAYA) form a helical membrane-spanning segment. The Cytoplasmic portion of the chain corresponds to 120 to 168 (SQTLRGALKAVPVGQWESGQALGLSKSAIFFRLVMPQMWRHALPGLGNQ). The helical transmembrane segment at 169–189 (WLVLLKDTALVSLISVNDLML) threads the bilayer. Residues 190–201 (QTKSIATRTQEP) are Periplasmic-facing. A helical transmembrane segment spans residues 202-222 (FTWYIVAAAIYLVITLLSQYI). Residues 223 to 238 (LKRIDLRATRFERRPS) are Cytoplasmic-facing.

This sequence belongs to the binding-protein-dependent transport system permease family. HisMQ subfamily. As to quaternary structure, the complex is composed of two ATP-binding proteins (ArtP), two transmembrane proteins (ArtM and ArtQ) and two solute-binding proteins (ArtJ and ArtI).

The protein resides in the cell inner membrane. Functionally, part of the ABC transporter complex ArtPIQMJ involved in arginine transport. Probably responsible for the translocation of the substrate across the membrane. The protein is Arginine ABC transporter permease protein ArtQ (artQ) of Escherichia coli O6:H1 (strain CFT073 / ATCC 700928 / UPEC).